We begin with the raw amino-acid sequence, 569 residues long: Proline--tRNA ligase (569 aa).

It belongs to the class-II aminoacyl-tRNA synthetase family. ProS type 1 subfamily. In terms of assembly, homodimer.

It is found in the cytoplasm. The enzyme catalyses tRNA(Pro) + L-proline + ATP = L-prolyl-tRNA(Pro) + AMP + diphosphate. Catalyzes the attachment of proline to tRNA(Pro) in a two-step reaction: proline is first activated by ATP to form Pro-AMP and then transferred to the acceptor end of tRNA(Pro). As ProRS can inadvertently accommodate and process non-cognate amino acids such as alanine and cysteine, to avoid such errors it has two additional distinct editing activities against alanine. One activity is designated as 'pretransfer' editing and involves the tRNA(Pro)-independent hydrolysis of activated Ala-AMP. The other activity is designated 'posttransfer' editing and involves deacylation of mischarged Ala-tRNA(Pro). The misacylated Cys-tRNA(Pro) is not edited by ProRS. In Shewanella loihica (strain ATCC BAA-1088 / PV-4), this protein is Proline--tRNA ligase.